The following is an 85-amino-acid chain: Large ribosomal subunit protein bL27 (85 aa).

Residues 1 to 20 (MAHKKAGGSTRNGRDSEAKR) form a disordered region.

The protein belongs to the bacterial ribosomal protein bL27 family.

This Klebsiella pneumoniae (strain 342) protein is Large ribosomal subunit protein bL27.